A 337-amino-acid polypeptide reads, in one-letter code: Glyceraldehyde-3-phosphate dehydrogenase 3, cytosolic (337 aa).

Residues 13–14 (RI), Asp-35, and Arg-82 contribute to the NAD(+) site. D-glyceraldehyde 3-phosphate is bound by residues 153–155 (SCT), Thr-184, 213–214 (TG), and Arg-236. Cys-154 serves as the catalytic Nucleophile. Asn-318 lines the NAD(+) pocket.

It belongs to the glyceraldehyde-3-phosphate dehydrogenase family. Homotetramer.

The protein resides in the cytoplasm. The catalysed reaction is D-glyceraldehyde 3-phosphate + phosphate + NAD(+) = (2R)-3-phospho-glyceroyl phosphate + NADH + H(+). The protein operates within carbohydrate degradation; glycolysis; pyruvate from D-glyceraldehyde 3-phosphate: step 1/5. Its function is as follows. Key enzyme in glycolysis that catalyzes the first step of the pathway by converting D-glyceraldehyde 3-phosphate (G3P) into 3-phospho-D-glyceroyl phosphate. Essential for the maintenance of cellular ATP levels and carbohydrate metabolism. In Oryza sativa subsp. japonica (Rice), this protein is Glyceraldehyde-3-phosphate dehydrogenase 3, cytosolic (GAPC3).